Reading from the N-terminus, the 1198-residue chain is Sterol 3-beta-glucosyltransferase (1198 aa).

Positions 1 to 11 (MPITQIISASD) are enriched in polar residues. Disordered regions lie at residues 1 to 89 (MPIT…DNAD) and 124 to 162 (SQVD…PEVP). Positions 35 to 51 (RHHRLSRSLSKFKRWRG) are enriched in basic residues. Residues 52–67 (RSNSSLSMGSSEQQEL) show a composition bias toward low complexity. A Phosphoserine modification is found at S76. A compositionally biased stretch (basic and acidic residues) spans 146-162 (VKSKKENLKTKSHPEVP). Residues 187–236 (AKLRQRFCLDEQEPFLNDFPAWLLKDVLVQGHIFITTKHFLFFAYLPKNP) form the GRAM 1 domain. One can recognise a PH domain in the interval 238–336 (SVKMSGNLNI…WVNALKKEQF (99 aa)). The disordered stretch occupies residues 427–465 (KSSFGKETPATAEQKNNGEDSKYLNVPTSAVPSSENGKK). A compositionally biased stretch (polar residues) spans 452 to 461 (VPTSAVPSSE). The 67-residue stretch at 570-636 (ERFRYHFKFN…VDVETCYKEK (67 aa)) folds into the GRAM 2 domain. S693 bears the Phosphoserine mark. The UDP-alpha-D-glucose site is built by S749, R750, D752, N1025, N1053, V1054, H1056, H1069, S1072, G1073, T1074, D1093, and Q1094.

The protein belongs to the glycosyltransferase 28 family.

The protein localises to the cytoplasm. It localises to the membrane. It catalyses the reaction a sterol + UDP-alpha-D-glucose = a sterol 3-beta-D-glucoside + UDP + H(+). It carries out the reaction ergosterol + UDP-alpha-D-glucose = ergosteryl 3-beta-D-glucoside + UDP + H(+). In terms of biological role, sterol glycosyltransferase responsible for the glycosylation of ergosterol to form ergosterol-glucoside. Also shows activity in vitro on other sterols such as cholesterol, beta-sitosterol, stigmasterol and tomatidine. In contrasts to what is observed in Pichia pastoris and Aspergillus oryzae, is not involved in cytoplasm to vacuole transport (Cvt), pexophagy or nonselective autophagy in Saccharomyces cerevisiae. The sequence is that of Sterol 3-beta-glucosyltransferase from Saccharomyces cerevisiae (strain YJM789) (Baker's yeast).